A 1046-amino-acid chain; its full sequence is Piwi-like protein 2 (1046 aa).

A compositionally biased stretch (pro residues) spans 1–12; the sequence is MDPKRPTFPSPP. The segment at 1-35 is disordered; the sequence is MDPKRPTFPSPPGVIRAPWQQSTEDQSQLLDQPSL. The span at 19–31 shows a compositional bias: polar residues; sequence WQQSTEDQSQLLD. Positions 462–575 constitute a PAZ domain; sequence SVLDVMNLIY…LLPELSFMTG (114 aa). In terms of domain architecture, Piwi spans 741–1032; that stretch reads LVVCIMTGNR…LAFLSGQYLH (292 aa). Catalysis depends on residues Asp818, Glu856, Asp888, and His1021.

The protein belongs to the argonaute family. Piwi subfamily. In terms of assembly, component of the PET complex. Requires Mg(2+) as cofactor. Post-translationally, methylated on arginine residues; required for the interaction with Tudor domain-containing protein and subsequent localization to the meiotic nuage, also named P granule. As to expression, detected in primordial germ cells (PGCs) from 3 dpf. In adult, it is found in both the female and male gonad. In the ovary, it is present in all stages of germ cell differentiation. In testis, it is present in mitotic and meiotic germ cells. No protein has been detected in the fully differentiated sperm cell.

It is found in the cytoplasm. Its subcellular location is the nucleus. Endoribonuclease that plays a central role during spermatogenesis by repressing transposable elements and preventing their mobilization, which is essential for the germline integrity. Plays an essential role in germ cell differentiation and meiosis, independently of the function in transposable elements repression. Acts via the piRNA metabolic process, which mediates the repression of transposable elements during meiosis by forming complexes composed of piRNAs and Piwi proteins and govern the methylation and subsequent repression of transposons. During piRNA biosynthesis, plays a key role in the piRNA amplification loop, also named ping-pong amplification cycle, by acting as a 'slicer-competent' piRNA endoribonuclease that cleaves primary piRNAs, which are then loaded onto 'slicer-incompetent' piwil4. Piwil2 slicing produces a pre-miRNA intermediate, which is then processed in mature piRNAs, and as well as a 16 nucleotide by-product that is degraded. Required for piwil4/miwi2 nuclear localization and association with secondary piRNAs antisense. Represses circadian rhythms by promoting the stability and activity of core clock components BMAL1 and CLOCK. This chain is Piwi-like protein 2 (piwil2), found in Danio rerio (Zebrafish).